The following is a 345-amino-acid chain: Phosphoribosylformylglycinamidine cyclo-ligase (345 aa).

The protein belongs to the AIR synthase family.

The protein localises to the cytoplasm. The catalysed reaction is 2-formamido-N(1)-(5-O-phospho-beta-D-ribosyl)acetamidine + ATP = 5-amino-1-(5-phospho-beta-D-ribosyl)imidazole + ADP + phosphate + H(+). It functions in the pathway purine metabolism; IMP biosynthesis via de novo pathway; 5-amino-1-(5-phospho-D-ribosyl)imidazole from N(2)-formyl-N(1)-(5-phospho-D-ribosyl)glycinamide: step 2/2. This is Phosphoribosylformylglycinamidine cyclo-ligase from Escherichia coli O6:K15:H31 (strain 536 / UPEC).